A 116-amino-acid chain; its full sequence is HVA22-like protein e (116 aa).

3 helical membrane passes run 12 to 32 (HSLAGPVVMLLYPLYASVIAI), 42 to 62 (QWLAYWILYSFLTLSELILQS), and 63 to 83 (LLEWIPIWYTAKLVFVAWLVL).

The protein belongs to the DP1 family. As to expression, predominantly expressed in stem.

Its subcellular location is the membrane. This chain is HVA22-like protein e (HVA22E), found in Arabidopsis thaliana (Mouse-ear cress).